The following is a 111-amino-acid chain: Glucosamine 6-phosphate N-acetyltransferase (111 aa).

In terms of domain architecture, N-acetyltransferase spans 1–111 (MKKDFHSTYY…MKKYASHSII (111 aa)). Substrate is bound by residues 33-36 (KFLR) and 45-47 (EEV). Acetyl-CoA is bound by residues 47–49 (VIV) and 55–60 (RKAIGK). Substrate is bound by residues 76-77 (YK) and D81. 90–92 (YEK) contributes to the acetyl-CoA binding site.

The protein belongs to the acetyltransferase family. GNA1 subfamily.

It carries out the reaction D-glucosamine 6-phosphate + acetyl-CoA = N-acetyl-D-glucosamine 6-phosphate + CoA + H(+). It functions in the pathway nucleotide-sugar biosynthesis; UDP-N-acetyl-alpha-D-glucosamine biosynthesis; N-acetyl-alpha-D-glucosamine 1-phosphate from alpha-D-glucosamine 6-phosphate (route I): step 1/2. This Schizosaccharomyces pombe (strain 972 / ATCC 24843) (Fission yeast) protein is Glucosamine 6-phosphate N-acetyltransferase (gna1).